The following is a 253-amino-acid chain: MSFSFSQPCPSGALLLVVVSSLLLWENVASVPLSSNETDGYPLSINGLFHNAMRLTWNIKNLNMELRKTYTVNQVSEKLYENYMLDFIEDMEYLVKALTCCHNYSIKTPENLDEAQQIPFNEFPKLILSRMWAWNETSKVLLTTLRSIPGMHDDVISLAKNIETKLAELFEYTQSILNSIYGTTTTGNVEYTVFSGLEDLKSSDEEFSLFDLCKFSYCLRVDIHMVELYLKLLECVVYVSSDVCLSKNIRDAS.

Positions 1–30 (MSFSFSQPCPSGALLLVVVSSLLLWENVAS) are cleaved as a signal peptide. N-linked (GlcNAc...) asparagine glycans are attached at residues N36, N103, and N135. 2 disulfides stabilise this stretch: C101-C218 and C235-C244.

This sequence belongs to the somatotropin/prolactin family. Expression restricted to the placental tissue. Expressed only in the spongiotrophoblasts.

Its subcellular location is the secreted. The sequence is that of Prolactin-7A2 (Prl7a2) from Mus musculus (Mouse).